Here is a 76-residue protein sequence, read N- to C-terminus: Contulakin-G (76 aa).

Residues 1 to 22 (MQTAYWVMVMMMVWIAAPLSEG) form the signal peptide. A propeptide spanning residues 23 to 50 (GKLNDVIRGLVPDDITPQLILGSLISRR) is cleaved from the precursor. Gln51 carries the post-translational modification Pyrrolidone carboxylic acid. The tract at residues 51 to 76 (QSEEGGSNATKKPYILRASDQVASGP) is disordered. O-linked (GalNAc...) threonine glycosylation is present at Thr60. A propeptide spanning residues 67–76 (RASDQVASGP) is cleaved from the precursor.

It belongs to the conotoxin C superfamily. In terms of processing, O-glycosylated. The glycosylation seems to enhance the affinity to the neurotensin receptors. Expressed by the venom duct.

The protein localises to the secreted. Acts as an agonist of neurotensin receptors. It binds to human neurotensin type 1 receptor (NTSR1), rat neurotensin types 1 and 2 receptors (NTSR1/NTSR2) and mouse neurotensin type 3 receptor (SORT1). This Conus geographus (Geography cone) protein is Contulakin-G.